The chain runs to 217 residues: Adenylate kinase (217 aa).

Position 10–15 (10–15 (GAGKGT)) interacts with ATP. The tract at residues 30–59 (STGDMFRAAMKEETDLGLEAKSYIDKGELV) is NMP. Residues Thr31, Arg36, 57–59 (ELV), 85–88 (GFPR), and Gln92 each bind AMP. An LID region spans residues 126-163 (GRRICKNCGATYHLVFNPPAKENVCDKCGGELYQREDD). Position 127 (Arg127) interacts with ATP. Residues Cys130 and Cys133 each coordinate Zn(2+). Residue 136–137 (TY) participates in ATP binding. Residues Cys150 and Cys153 each contribute to the Zn(2+) site. Arg160 and Arg171 together coordinate AMP. Lys199 serves as a coordination point for ATP.

It belongs to the adenylate kinase family. As to quaternary structure, monomer.

The protein resides in the cytoplasm. The catalysed reaction is AMP + ATP = 2 ADP. Its pathway is purine metabolism; AMP biosynthesis via salvage pathway; AMP from ADP: step 1/1. Its function is as follows. Catalyzes the reversible transfer of the terminal phosphate group between ATP and AMP. Plays an important role in cellular energy homeostasis and in adenine nucleotide metabolism. The chain is Adenylate kinase from Bacillus licheniformis (strain ATCC 14580 / DSM 13 / JCM 2505 / CCUG 7422 / NBRC 12200 / NCIMB 9375 / NCTC 10341 / NRRL NRS-1264 / Gibson 46).